We begin with the raw amino-acid sequence, 325 residues long: Protein translocase subunit SecF (325 aa).

6 helical membrane-spanning segments follow: residues 36–56, 148–168, 175–197, 202–224, 254–274, and 281–301; these read GYIL…TKGF, LAQG…IYVG, LGFG…FSAL, DLTF…IVVF, TIIT…FGGP, and LALL…AIAI.

This sequence belongs to the SecD/SecF family. SecF subfamily. In terms of assembly, forms a complex with SecD. Part of the essential Sec protein translocation apparatus which comprises SecA, SecYEG and auxiliary proteins SecDF-YajC and YidC.

The protein localises to the cell inner membrane. Part of the Sec protein translocase complex. Interacts with the SecYEG preprotein conducting channel. SecDF uses the proton motive force (PMF) to complete protein translocation after the ATP-dependent function of SecA. The protein is Protein translocase subunit SecF of Haemophilus influenzae (strain ATCC 51907 / DSM 11121 / KW20 / Rd).